The sequence spans 1232 residues: Anion exchange protein 3 (1232 aa).

The span at 1–11 (MANGVIPPPGG) shows a compositional bias: pro residues. Disordered stretches follow at residues 1–316 (MANG…KLDR) and 429–499 (NDDK…DSHR). At 1–708 (MANGVIPPPG…DLRDALHSQC (708 aa)) the chain is on the cytoplasmic side. Residues 58 to 75 (DPEKPSRSYSERDFEFHR) are compositionally biased toward basic and acidic residues. Basic residues-rich tracts occupy residues 76–97 (HTSHHTHHPLSARLPPPHKLRR) and 104–113 (RHTRRKRKKE). Acidic residues predominate over residues 134–152 (VDEEEEEEEEEEGESEAEP). Residues Ser167, Ser170, Ser175, and Ser198 each carry the phosphoserine modification. The segment covering 267-279 (DDMKSHRLEDNPG) has biased composition (basic and acidic residues). The span at 280–289 (VRRHLVKKPS) shows a compositional bias: basic residues. Arg295 bears the Omega-N-methylarginine mark. Residues 305–316 (LRRKKKKKKLDR) show a composition bias toward basic residues. Over residues 440 to 450 (NPSSSSMNSVL) the composition is skewed to polar residues. The segment covering 481–499 (HDPDAKEKPLHMPGGDSHR) has biased composition (basic and acidic residues). The next 5 helical transmembrane spans lie at 709 to 731 (VAAVLFIYFAALSPAITFGGLLG), 737 to 774 (LMGVSELIVSTAVLGVLFSLLGAQPLLVVGFSGPLLVF), 794 to 816 (VWVGLWLVVFVLALVAAEGSFLV), 826 to 847 (IFAFLISLIFIYETFYKLYKVF), and 893 to 910 (ALLSLILMLGTFFIAFFL). A membrane (anion exchange) region spans residues 709 to 1232 (VAAVLFIYFA…DEYNELHMPV (524 aa)). Residues 911–925 (RKFRNSRFLGGKARR) lie on the Cytoplasmic side of the membrane. Helical transmembrane passes span 926–946 (IIGDFGIPISILVMVLVDYSI), 980–1002 (PFPPWMMVAAAVPALLVLILIFM), 1028–1049 (LLLIGSLGGLCGLFGLPWLTAA), 1083–1128 (VTGV…IQLS), and 1155–1191 (MHLFTCIQLGCIALLWVVKSTAASLAFPFLLLLTVPL). Cys1165 carries S-palmitoyl cysteine lipidation.

The protein belongs to the anion exchanger (TC 2.A.31) family.

It localises to the cell membrane. The catalysed reaction is hydrogencarbonate(in) + chloride(out) = hydrogencarbonate(out) + chloride(in). Sodium-independent anion exchanger which mediates the electroneutral exchange of chloride for bicarbonate ions across the cell membrane. May be involved in the regulation of intracellular pH, and the modulation of cardiac action potential. This chain is Anion exchange protein 3 (SLC4A3), found in Plecturocebus moloch (Dusky titi monkey).